Reading from the N-terminus, the 359-residue chain is Phosphate acyltransferase (359 aa).

The protein belongs to the PlsX family. Homodimer. Probably interacts with PlsY.

It is found in the cytoplasm. It catalyses the reaction a fatty acyl-[ACP] + phosphate = an acyl phosphate + holo-[ACP]. The protein operates within lipid metabolism; phospholipid metabolism. Its function is as follows. Catalyzes the reversible formation of acyl-phosphate (acyl-PO(4)) from acyl-[acyl-carrier-protein] (acyl-ACP). This enzyme utilizes acyl-ACP as fatty acyl donor, but not acyl-CoA. The sequence is that of Phosphate acyltransferase from Salmonella agona (strain SL483).